Here is a 457-residue protein sequence, read N- to C-terminus: MDLKGKNVLVVGLGRSGLASARFLKKHGAFVIGFDEKAEEQFKEEKNDAQKLLDEIYYCEIPDEFIDRVQLVIVSPGVPLSKRPLVLAHKKGIEVIGEIELAYRFCKSKNIVAITGTNGKTTTTTLVGEILKKQYEDVVVCGNIGLPFIDTIETSSEDTIFVLEISSFQLETIKYFKPKIGCILNITPDHLNRHLTMENYTKAKMRIFENIDEMGYTVLNYDNNITRDLIGLAKGNVIVFSKTKTQFENVVFVENDVIYFTFEGKTQEVMKKDEIFIPGQHNLENALAAISCTLPFGIEKDTIEQVLKTFRGVEHRIEFVAEINGIKFYNDSKGTNTDAAEKALNAFENPIILIAGGYDKGESFEKFASLVAKKVKKVFLLGQTKQKIASELERIGYKNFEFVSTLKEAVRKSFECAQNGDIVLLSPACASWDMFENYEQRGRMFKEYVNELLTTGM.

116–122 lines the ATP pocket; that stretch reads GTNGKTT.

Belongs to the MurCDEF family.

The protein localises to the cytoplasm. It catalyses the reaction UDP-N-acetyl-alpha-D-muramoyl-L-alanine + D-glutamate + ATP = UDP-N-acetyl-alpha-D-muramoyl-L-alanyl-D-glutamate + ADP + phosphate + H(+). The protein operates within cell wall biogenesis; peptidoglycan biosynthesis. Its function is as follows. Cell wall formation. Catalyzes the addition of glutamate to the nucleotide precursor UDP-N-acetylmuramoyl-L-alanine (UMA). The sequence is that of UDP-N-acetylmuramoylalanine--D-glutamate ligase from Caldicellulosiruptor bescii (strain ATCC BAA-1888 / DSM 6725 / KCTC 15123 / Z-1320) (Anaerocellum thermophilum).